The sequence spans 226 residues: ATP-dependent Clp protease proteolytic subunit 2 (226 aa).

The active-site Nucleophile is serine 118. Histidine 143 is a catalytic residue.

The protein belongs to the peptidase S14 family. Fourteen ClpP subunits assemble into 2 heptameric rings which stack back to back to give a disk-like structure with a central cavity, resembling the structure of eukaryotic proteasomes.

The protein localises to the cytoplasm. It catalyses the reaction Hydrolysis of proteins to small peptides in the presence of ATP and magnesium. alpha-casein is the usual test substrate. In the absence of ATP, only oligopeptides shorter than five residues are hydrolyzed (such as succinyl-Leu-Tyr-|-NHMec, and Leu-Tyr-Leu-|-Tyr-Trp, in which cleavage of the -Tyr-|-Leu- and -Tyr-|-Trp bonds also occurs).. Cleaves peptides in various proteins in a process that requires ATP hydrolysis. Has a chymotrypsin-like activity. Plays a major role in the degradation of misfolded proteins. The protein is ATP-dependent Clp protease proteolytic subunit 2 of Synechocystis sp. (strain ATCC 27184 / PCC 6803 / Kazusa).